A 466-amino-acid chain; its full sequence is Ribulose bisphosphate carboxylase large chain (466 aa).

Lys5 carries the post-translational modification N6,N6,N6-trimethyllysine. Substrate is bound by residues Asn114 and Thr164. The active-site Proton acceptor is Lys166. Lys168 contacts substrate. Residues Lys192, Asp194, and Glu195 each coordinate Mg(2+). Lys192 is modified (N6-carboxylysine). The active-site Proton acceptor is the His285. Arg286, His318, and Ser370 together coordinate substrate.

This sequence belongs to the RuBisCO large chain family. Type I subfamily. Heterohexadecamer of 8 large chains and 8 small chains; disulfide-linked. The disulfide link is formed within the large subunit homodimers. Mg(2+) is required as a cofactor. In terms of processing, the disulfide bond which can form in the large chain dimeric partners within the hexadecamer appears to be associated with oxidative stress and protein turnover.

It localises to the plastid. It is found in the chloroplast. The enzyme catalyses 2 (2R)-3-phosphoglycerate + 2 H(+) = D-ribulose 1,5-bisphosphate + CO2 + H2O. The catalysed reaction is D-ribulose 1,5-bisphosphate + O2 = 2-phosphoglycolate + (2R)-3-phosphoglycerate + 2 H(+). Its function is as follows. RuBisCO catalyzes two reactions: the carboxylation of D-ribulose 1,5-bisphosphate, the primary event in carbon dioxide fixation, as well as the oxidative fragmentation of the pentose substrate in the photorespiration process. Both reactions occur simultaneously and in competition at the same active site. The sequence is that of Ribulose bisphosphate carboxylase large chain from Poliothyrsis sinensis (Chinese pearlbloom tree).